The chain runs to 158 residues: NADH-quinone oxidoreductase subunit B (158 aa).

4 residues coordinate [4Fe-4S] cluster: C37, C38, C102, and C132.

It belongs to the complex I 20 kDa subunit family. NDH-1 is composed of 14 different subunits. Subunits NuoB, C, D, E, F, and G constitute the peripheral sector of the complex. [4Fe-4S] cluster serves as cofactor.

The protein localises to the cell inner membrane. The catalysed reaction is a quinone + NADH + 5 H(+)(in) = a quinol + NAD(+) + 4 H(+)(out). NDH-1 shuttles electrons from NADH, via FMN and iron-sulfur (Fe-S) centers, to quinones in the respiratory chain. Couples the redox reaction to proton translocation (for every two electrons transferred, four hydrogen ions are translocated across the cytoplasmic membrane), and thus conserves the redox energy in a proton gradient. This Legionella pneumophila (strain Corby) protein is NADH-quinone oxidoreductase subunit B.